Consider the following 451-residue polypeptide: UDP-N-acetylmuramate--L-alanine ligase (451 aa).

110 to 116 is an ATP binding site; sequence GTHGKTT.

This sequence belongs to the MurCDEF family.

The protein localises to the cytoplasm. It catalyses the reaction UDP-N-acetyl-alpha-D-muramate + L-alanine + ATP = UDP-N-acetyl-alpha-D-muramoyl-L-alanine + ADP + phosphate + H(+). It functions in the pathway cell wall biogenesis; peptidoglycan biosynthesis. Functionally, cell wall formation. This is UDP-N-acetylmuramate--L-alanine ligase from Francisella tularensis subsp. tularensis (strain WY96-3418).